The chain runs to 335 residues: Phospho-N-acetylmuramoyl-pentapeptide-transferase (335 aa).

10 helical membrane-spanning segments follow: residues 5 to 25 (IFLA…LMIP), 50 to 70 (TPTM…LIMA), 78 to 98 (MVMV…DDFI), 114 to 133 (LIGQ…RYLG), 145 to 165 (IHLE…VGIT), 177 to 197 (LAAG…TLAA), 200 to 220 (GGGV…AAAV), 236 to 256 (VFMG…LAVL), 262 to 282 (ILLI…LQVF), and 311 to 331 (VVMV…IAYM).

This sequence belongs to the glycosyltransferase 4 family. MraY subfamily. It depends on Mg(2+) as a cofactor.

It localises to the cell membrane. The catalysed reaction is UDP-N-acetyl-alpha-D-muramoyl-L-alanyl-gamma-D-glutamyl-meso-2,6-diaminopimeloyl-D-alanyl-D-alanine + di-trans,octa-cis-undecaprenyl phosphate = di-trans,octa-cis-undecaprenyl diphospho-N-acetyl-alpha-D-muramoyl-L-alanyl-D-glutamyl-meso-2,6-diaminopimeloyl-D-alanyl-D-alanine + UMP. Its pathway is cell wall biogenesis; peptidoglycan biosynthesis. Functionally, catalyzes the initial step of the lipid cycle reactions in the biosynthesis of the cell wall peptidoglycan: transfers peptidoglycan precursor phospho-MurNAc-pentapeptide from UDP-MurNAc-pentapeptide onto the lipid carrier undecaprenyl phosphate, yielding undecaprenyl-pyrophosphoryl-MurNAc-pentapeptide, known as lipid I. The chain is Phospho-N-acetylmuramoyl-pentapeptide-transferase from Desulfitobacterium hafniense (strain DSM 10664 / DCB-2).